The chain runs to 465 residues: UDP-N-acetylmuramate--L-alanine ligase (465 aa).

Residue 112 to 118 (GTHGKTT) coordinates ATP.

Belongs to the MurCDEF family.

It localises to the cytoplasm. The catalysed reaction is UDP-N-acetyl-alpha-D-muramate + L-alanine + ATP = UDP-N-acetyl-alpha-D-muramoyl-L-alanine + ADP + phosphate + H(+). It participates in cell wall biogenesis; peptidoglycan biosynthesis. Cell wall formation. The polypeptide is UDP-N-acetylmuramate--L-alanine ligase (Burkholderia thailandensis (strain ATCC 700388 / DSM 13276 / CCUG 48851 / CIP 106301 / E264)).